Here is a 365-residue protein sequence, read N- to C-terminus: Aminomethyltransferase (365 aa).

It belongs to the GcvT family. In terms of assembly, the glycine cleavage system is composed of four proteins: P, T, L and H.

The catalysed reaction is N(6)-[(R)-S(8)-aminomethyldihydrolipoyl]-L-lysyl-[protein] + (6S)-5,6,7,8-tetrahydrofolate = N(6)-[(R)-dihydrolipoyl]-L-lysyl-[protein] + (6R)-5,10-methylene-5,6,7,8-tetrahydrofolate + NH4(+). Its function is as follows. The glycine cleavage system catalyzes the degradation of glycine. This is Aminomethyltransferase from Synechococcus sp. (strain CC9902).